Here is a 427-residue protein sequence, read N- to C-terminus: UPF0597 protein CD630_32320 (427 aa).

It belongs to the UPF0597 family.

This Clostridioides difficile (strain 630) (Peptoclostridium difficile) protein is UPF0597 protein CD630_32320.